The chain runs to 396 residues: Phosphopentomutase (396 aa).

The Mn(2+) site is built by Asp-13, Asp-288, His-293, Asp-329, His-330, and His-341.

The protein belongs to the phosphopentomutase family. Mn(2+) is required as a cofactor.

It is found in the cytoplasm. It carries out the reaction 2-deoxy-alpha-D-ribose 1-phosphate = 2-deoxy-D-ribose 5-phosphate. The enzyme catalyses alpha-D-ribose 1-phosphate = D-ribose 5-phosphate. It participates in carbohydrate degradation; 2-deoxy-D-ribose 1-phosphate degradation; D-glyceraldehyde 3-phosphate and acetaldehyde from 2-deoxy-alpha-D-ribose 1-phosphate: step 1/2. Its function is as follows. Isomerase that catalyzes the conversion of deoxy-ribose 1-phosphate (dRib-1-P) and ribose 1-phosphate (Rib-1-P) to deoxy-ribose 5-phosphate (dRib-5-P) and ribose 5-phosphate (Rib-5-P), respectively. This is Phosphopentomutase from Clostridium beijerinckii (strain ATCC 51743 / NCIMB 8052) (Clostridium acetobutylicum).